Reading from the N-terminus, the 494-residue chain is Bifunctional protein HldE (494 aa).

Residues 1–334 form a ribokinase region; it reads MPTPILDFDA…RKILPHAYLA (334 aa). Residue 209-212 participates in ATP binding; the sequence is NRKE. Asp-279 is a catalytic residue. The cytidylyltransferase stretch occupies residues 362–494; sequence FTNGCFDILH…LVHRARGGAK (133 aa).

This sequence in the N-terminal section; belongs to the carbohydrate kinase PfkB family. In the C-terminal section; belongs to the cytidylyltransferase family. Homodimer.

It catalyses the reaction D-glycero-beta-D-manno-heptose 7-phosphate + ATP = D-glycero-beta-D-manno-heptose 1,7-bisphosphate + ADP + H(+). It carries out the reaction D-glycero-beta-D-manno-heptose 1-phosphate + ATP + H(+) = ADP-D-glycero-beta-D-manno-heptose + diphosphate. Its pathway is nucleotide-sugar biosynthesis; ADP-L-glycero-beta-D-manno-heptose biosynthesis; ADP-L-glycero-beta-D-manno-heptose from D-glycero-beta-D-manno-heptose 7-phosphate: step 1/4. It functions in the pathway nucleotide-sugar biosynthesis; ADP-L-glycero-beta-D-manno-heptose biosynthesis; ADP-L-glycero-beta-D-manno-heptose from D-glycero-beta-D-manno-heptose 7-phosphate: step 3/4. Catalyzes the phosphorylation of D-glycero-D-manno-heptose 7-phosphate at the C-1 position to selectively form D-glycero-beta-D-manno-heptose-1,7-bisphosphate. In terms of biological role, catalyzes the ADP transfer from ATP to D-glycero-beta-D-manno-heptose 1-phosphate, yielding ADP-D-glycero-beta-D-manno-heptose. The chain is Bifunctional protein HldE from Bradyrhizobium diazoefficiens (strain JCM 10833 / BCRC 13528 / IAM 13628 / NBRC 14792 / USDA 110).